The following is a 306-amino-acid chain: tRNA dimethylallyltransferase (306 aa).

14–21 (GPTAAGKS) contacts ATP. 16–21 (TAAGKS) contacts substrate. The interaction with substrate tRNA stretch occupies residues 39–42 (DSRL).

It belongs to the IPP transferase family. As to quaternary structure, monomer. The cofactor is Mg(2+).

It catalyses the reaction adenosine(37) in tRNA + dimethylallyl diphosphate = N(6)-dimethylallyladenosine(37) in tRNA + diphosphate. Its function is as follows. Catalyzes the transfer of a dimethylallyl group onto the adenine at position 37 in tRNAs that read codons beginning with uridine, leading to the formation of N6-(dimethylallyl)adenosine (i(6)A). This is tRNA dimethylallyltransferase from Synechococcus sp. (strain ATCC 27144 / PCC 6301 / SAUG 1402/1) (Anacystis nidulans).